A 1042-amino-acid polypeptide reads, in one-letter code: Ubiquitin carboxyl-terminal hydrolase 38 (1042 aa).

The USP domain occupies 445 to 949; sequence TGLINLGNTC…TAYVLLYKKQ (505 aa). Cys-454 functions as the Nucleophile in the catalytic mechanism. His-857 acts as the Proton acceptor in catalysis.

It belongs to the peptidase C19 family. In terms of assembly, interacts with isoform 1 of FBXW7; this interaction prevents FBXW7-mediated degradation of MYC. Highly expressed in skeletal muscle. Expressed in adrenal gland.

It is found in the cytoplasm. The protein localises to the nucleus. It catalyses the reaction Thiol-dependent hydrolysis of ester, thioester, amide, peptide and isopeptide bonds formed by the C-terminal Gly of ubiquitin (a 76-residue protein attached to proteins as an intracellular targeting signal).. Deubiquitinating enzyme that plays a role in various cellular processes, including DNA repair, cell cycle regulation, and immune response. Plays a role in the inhibition of type I interferon signaling by mediating the 'Lys-33' to 'Lys-48' ubiquitination transition of TBK1 leading to its degradation. Cleaves the ubiquitin chain from the histone demethylase LSD1/KDM1A and prevents it from degradation by the 26S proteasome, thus maintaining LSD1 protein level in cells. Plays a role in the DNA damage response by regulating the deacetylase activity of HDAC1. Mechanistically, removes the 'Lys-63'-linked ubiquitin chain promoting the deacetylase activity of HDAC1 in response to DNA damage. Also acts as a specific deubiquitinase of histone deacetylase 3/HDAC3 and cleaves its 'Lys-63'-linked ubiquitin chains to lower its histone deacetylase activity. Regulates MYC levels and cell proliferation via antagonizing ubiquitin E3 ligase FBXW7 thereby preventing MYC 'Lys-48'-linked ubiquitination and degradation. Participates in antiviral response by removing both 'Lys-48'-linked and 'Lys-63'-linked polyubiquitination of Zika virus envelope protein E. Constitutively associated with IL-33R/IL1RL1, deconjugates its 'Lys-27'-linked polyubiquitination resulting in its autophagic degradation. The polypeptide is Ubiquitin carboxyl-terminal hydrolase 38 (USP38) (Homo sapiens (Human)).